The following is a 135-amino-acid chain: Galectin-1 (135 aa).

Residue Ala2 is modified to N-acetylalanine. A Galectin domain is found at 4–135 (GLVASNLNLK…DFKIKCVAFE (132 aa)). 3 positions are modified to N6-acetyllysine: Lys13, Lys19, and Lys29. Ser30 bears the Phosphoserine mark. A beta-D-galactoside contacts are provided by residues 45–49 (HFNPR), His53, Asn62, and 69–72 (WGTE). Lys108 bears the N6-acetyllysine; alternate mark. Position 108 is an N6-succinyllysine; alternate (Lys108). The residue at position 128 (Lys128) is an N6-acetyllysine.

In terms of assembly, homodimer. Binds LGALS3BP. Interacts with CD2, CD3, CD4, CD6, CD7, CD43, ALCAM and CD45. Interacts with laminin (via poly-N-acetyllactosamine). Interacts with SUSD2. Interacts with cargo receptor TMED10; the interaction mediates the translocation from the cytoplasm into the ERGIC (endoplasmic reticulum-Golgi intermediate compartment) and thereby secretion. Interacts with CD69.

Its subcellular location is the secreted. It is found in the extracellular space. The protein resides in the extracellular matrix. It localises to the cytoplasm. Lectin that binds beta-galactoside and a wide array of complex carbohydrates. Plays a role in regulating apoptosis, cell proliferation and cell differentiation. Inhibits CD45 protein phosphatase activity and therefore the dephosphorylation of Lyn kinase. Strong inducer of T-cell apoptosis. Plays a negative role in Th17 cell differentiation via activation of the receptor CD69. The polypeptide is Galectin-1 (Lgals1) (Mus musculus (Mouse)).